Reading from the N-terminus, the 98-residue chain is Small ribosomal subunit protein uS19 (98 aa).

Positions 74-98 are disordered; the sequence is FAPTRNYRGHAGGKSEKGGSAPRKK.

This sequence belongs to the universal ribosomal protein uS19 family.

Functionally, protein S19 forms a complex with S13 that binds strongly to the 16S ribosomal RNA. In Chlorobium chlorochromatii (strain CaD3), this protein is Small ribosomal subunit protein uS19.